Here is a 288-residue protein sequence, read N- to C-terminus: Diaminopimelate epimerase (288 aa).

Substrate-binding residues include N13, Q46, and N66. The Proton donor role is filled by C75. Substrate is bound by residues 76 to 77 (GN), N166, N199, and 217 to 218 (ER). C226 (proton acceptor) is an active-site residue. Residue 227–228 (GT) coordinates substrate.

The protein belongs to the diaminopimelate epimerase family. In terms of assembly, homodimer.

The protein localises to the cytoplasm. The catalysed reaction is (2S,6S)-2,6-diaminopimelate = meso-2,6-diaminopimelate. Its pathway is amino-acid biosynthesis; L-lysine biosynthesis via DAP pathway; DL-2,6-diaminopimelate from LL-2,6-diaminopimelate: step 1/1. In terms of biological role, catalyzes the stereoinversion of LL-2,6-diaminopimelate (L,L-DAP) to meso-diaminopimelate (meso-DAP), a precursor of L-lysine and an essential component of the bacterial peptidoglycan. The chain is Diaminopimelate epimerase from Cupriavidus taiwanensis (strain DSM 17343 / BCRC 17206 / CCUG 44338 / CIP 107171 / LMG 19424 / R1) (Ralstonia taiwanensis (strain LMG 19424)).